Here is a 59-residue protein sequence, read N- to C-terminus: Potassium channel toxin alpha-KTx 16.4 (59 aa).

The N-terminal stretch at methionine 1–alanine 22 is a signal peptide. Disulfide bonds link cysteine 30/cysteine 51, cysteine 36/cysteine 56, and cysteine 40/cysteine 58.

It belongs to the short scorpion toxin superfamily. Potassium channel inhibitor family. Alpha-KTx 16 subfamily. As to expression, expressed by the venom gland.

The protein resides in the secreted. In terms of biological role, weak inhibitor of voltage-gated potassium channel hKv1.3/KCNA3. This chain is Potassium channel toxin alpha-KTx 16.4, found in Mesobuthus eupeus (Lesser Asian scorpion).